The following is a 266-amino-acid chain: CAAX prenyl protease 2 (266 aa).

Helical transmembrane passes span 1-21, 42-59, and 78-98; these read MGAG…VHLF, LLSN…LRDY, and ITYP…MMQI. Residues E131 and H164 each act as proton donor/acceptor in the active site. A run of 3 helical transmembrane segments spans residues 186 to 206, 210 to 230, and 239 to 259; these read GFQF…QLTT, IVPI…WLEI, and RLTL…LLYT.

It belongs to the peptidase U48 family.

The protein resides in the endoplasmic reticulum membrane. It localises to the membrane. The enzyme catalyses Hydrolyzes the peptide bond -P2-(S-farnesyl or geranylgeranyl)C-P1'-P2'-P3'-COOH where P1' and P2' are amino acids with aliphatic sidechains and P3' is any C-terminal residue.. In terms of biological role, protease involved in the processing of a variety of prenylated proteins containing the C-terminal CAAX motif, where C is a cysteine modified with an isoprenoid lipid, A is an aliphatic amino acid and X is any C-terminal amino acid. Proteolytically removes the C-terminal three residues of farnesylated and geranylated proteins, leaving the prenylated cysteine as the new C-terminus. This Caenorhabditis elegans protein is CAAX prenyl protease 2.